The chain runs to 182 residues: Heat shock protein beta-2 (182 aa).

One can recognise a sHSP domain in the interval 55-163; that stretch reads RAGEGARAGA…DTEVNEVYIS (109 aa).

It belongs to the small heat shock protein (HSP20) family. As to quaternary structure, interacts with DMPK; may enhance its kinase activity.

It localises to the cytoplasm. It is found in the nucleus. May regulate the kinase DMPK. This Mus musculus (Mouse) protein is Heat shock protein beta-2 (Hspb2).